The sequence spans 538 residues: Syncytin-1 (538 aa).

Residues 1–20 (MALPYHIFLFTVLLPSFTLT) form the signal peptide. Topologically, residues 21-443 (APPPCRCMTS…NTGPWGLLSQ (423 aa)) are extracellular. A glycan (N-linked (GlcNAc...) asparagine) is linked at Asn169. Positions 186-189 (CWIC) match the CXXC motif. 3 disulfide bridges follow: Cys186–Cys189, Cys186–Cys405, and Cys397–Cys404. N-linked (GlcNAc...) asparagine glycans are attached at residues Asn208, Asn214, Asn234, Asn242, and Asn281. The fusion peptide stretch occupies residues 320-340 (ILPFVIGAGVLGALGTGIGGI). The immunosuppression stretch occupies residues 380 to 396 (LQNRRALDLLTAERGGT). Positions 397-405 (CLFLGEECC) match the CX6CC motif. A glycan (N-linked (GlcNAc...) asparagine) is linked at Asn409. Residues 444-464 (WMPWILPFLGPLAAIILLLLF) traverse the membrane as a helical segment. The segment at 465 to 484 (GPCIFNLLVNFVSSRIEAVK) is essential for the fusiogenic function. Over 465-538 (GPCIFNLLVN…LLRPNSAGSS (74 aa)) the chain is Cytoplasmic. The segment at 496–538 (KIYRRPLDRPASPRSDVNDIKGTPPEEILTAQPLLRPNSAGSS) is disordered.

Belongs to the gamma type-C retroviral envelope protein family. HERV class-I W env subfamily. The mature envelope protein (Env) consists of a trimer of SU-TM heterodimers attached probably by a labile interchain disulfide bond. Interacts with the C-type lectin CD209/DC-SIGN. Post-translationally, specific enzymatic cleavages in vivo yield mature proteins. Envelope glycoproteins are synthesized as an inactive precursor that is heavily N-glycosylated and processed likely by furin in the Golgi to yield the mature SU and TM proteins. The cleavage site between SU and TM requires the minimal sequence [KR]-X-[KR]-R. The CXXC motif is highly conserved across a broad range of retroviral envelope proteins. It is thought to participate in the formation of a labile disulfide bond possibly with the CX6CC motif present in the transmembrane protein.

The protein localises to the cell membrane. The protein resides in the virion. Functionally, this endogenous retroviral envelope protein has retained its original fusogenic properties and participates in trophoblast fusion and the formation of a syncytium during placenta morphogenesis. May recognize and induce fusion through binding of SLC1A4 and SLC1A5. In terms of biological role, endogenous envelope proteins may have kept, lost or modified their original function during evolution. Retroviral envelope proteins mediate receptor recognition and membrane fusion during early infection. The surface protein (SU) mediates receptor recognition, while the transmembrane protein (TM) acts as a class I viral fusion protein. The protein may have at least 3 conformational states: pre-fusion native state, pre-hairpin intermediate state, and post-fusion hairpin state. During viral and target cell membrane fusion, the coiled coil regions (heptad repeats) assume a trimer-of-hairpins structure, positioning the fusion peptide in close proximity to the C-terminal region of the ectodomain. The formation of this structure appears to drive apposition and subsequent fusion of membranes. In Pan troglodytes (Chimpanzee), this protein is Syncytin-1 (ERVW-1).